Here is a 234-residue protein sequence, read N- to C-terminus: Protein XNDC1N (234 aa).

The chain is Protein XNDC1N from Homo sapiens (Human).